The primary structure comprises 306 residues: Large ribosomal subunit protein mL45 (306 aa).

The tract at residues 287–306 is disordered; the sequence is LKPEEEYEEAQGEAQKPQLA.

It belongs to the mitochondrion-specific ribosomal protein mL45 family. Component of the mitochondrial large ribosomal subunit (mt-LSU). Mature mammalian 55S mitochondrial ribosomes consist of a small (28S) and a large (39S) subunit. The 28S small subunit contains a 12S ribosomal RNA (12S mt-rRNA) and 30 different proteins. The 39S large subunit contains a 16S rRNA (16S mt-rRNA), a copy of mitochondrial valine transfer RNA (mt-tRNA(Val)), which plays an integral structural role, and 52 different proteins.

It is found in the mitochondrion. Its function is as follows. Component of the mitochondrial large ribosomal subunit (mt-LSU). Within the mitochondrial ribosomes, required to direct the nascent polypeptide toward the tunnel exit and position the exit at a distance from the membrane surface. The sequence is that of Large ribosomal subunit protein mL45 from Homo sapiens (Human).